A 297-amino-acid chain; its full sequence is Homoserine kinase (297 aa).

ATP is bound at residue 82–92; it reads PLTRGLGSSAS.

It belongs to the GHMP kinase family. Homoserine kinase subfamily.

The protein localises to the cytoplasm. The catalysed reaction is L-homoserine + ATP = O-phospho-L-homoserine + ADP + H(+). Its pathway is amino-acid biosynthesis; L-threonine biosynthesis; L-threonine from L-aspartate: step 4/5. Functionally, catalyzes the ATP-dependent phosphorylation of L-homoserine to L-homoserine phosphate. This is Homoserine kinase from Bacillus cereus (strain ATCC 10987 / NRS 248).